We begin with the raw amino-acid sequence, 322 residues long: Reticulocalbin-1 (322 aa).

The first 19 residues, 1–19 (MDVLGFICAVFLGTVVLHA), serve as a signal peptide directing secretion. A glycan (N-linked (GlcNAc...) asparagine) is linked at Asn-44. EF-hand domains are found at residues 70 to 105 (ESKD…VQKR), 106 to 141 (YVYE…YYLS), 157 to 192 (KMLP…EEFE), 194 to 229 (MKDI…HEDR), 235 to 270 (WVKT…QDYD), and 271 to 306 (HAQA…FVGS). Residues Asp-83, Asp-85, Asn-87, Tyr-89, Glu-94, Asp-119, Asn-121, Asp-123, Lys-125, Glu-130, Asp-170, Asp-172, Asp-174, Glu-181, Asp-207, Asn-209, Asp-211, His-213, Glu-218, Asp-248, Asn-250, Asp-252, Lys-254, Glu-259, Asp-284, Asp-286, Asp-288, Met-290, and Glu-295 each contribute to the Ca(2+) site. The Prevents secretion from ER motif lies at 319–322 (HDEL).

It belongs to the CREC family.

Its subcellular location is the endoplasmic reticulum lumen. Functionally, may regulate calcium-dependent activities in the endoplasmic reticulum lumen or post-ER compartment. The sequence is that of Reticulocalbin-1 (rcn1) from Takifugu rubripes (Japanese pufferfish).